Here is a 322-residue protein sequence, read N- to C-terminus: Acetyl-coenzyme A carboxylase carboxyl transferase subunit alpha (322 aa).

Positions 39–293 (RLQKKSQALT…RRALTDTLAE (255 aa)) constitute a CoA carboxyltransferase C-terminal domain.

Belongs to the AccA family. Acetyl-CoA carboxylase is a heterohexamer composed of biotin carboxyl carrier protein (AccB), biotin carboxylase (AccC) and two subunits each of ACCase subunit alpha (AccA) and ACCase subunit beta (AccD).

It localises to the cytoplasm. It catalyses the reaction N(6)-carboxybiotinyl-L-lysyl-[protein] + acetyl-CoA = N(6)-biotinyl-L-lysyl-[protein] + malonyl-CoA. Its pathway is lipid metabolism; malonyl-CoA biosynthesis; malonyl-CoA from acetyl-CoA: step 1/1. Its function is as follows. Component of the acetyl coenzyme A carboxylase (ACC) complex. First, biotin carboxylase catalyzes the carboxylation of biotin on its carrier protein (BCCP) and then the CO(2) group is transferred by the carboxyltransferase to acetyl-CoA to form malonyl-CoA. The protein is Acetyl-coenzyme A carboxylase carboxyl transferase subunit alpha of Thiobacillus denitrificans (strain ATCC 25259 / T1).